The primary structure comprises 205 residues: MIGRLRGIILEKQPPLVLLETNGVGYEVQLPMTCFYELPDIGQEAIIFTQFVVREDAQLLYGFNDKQERALFRELIKVNGVGPKLALAILSGMSAQQFVAAVEREDITTLVKLPGVGKKTAERLVVEMKDRFKGLNGDLFNNTGDIQLPASNSSQISDADIEAEAASALVALGYKPQEASRLVSKIAKPGADCETLIRDALRAAL.

The domain I stretch occupies residues Met-1–Asn-64. A domain II region spans residues Asp-65 to Thr-143. The segment at Gly-144–Ile-156 is flexible linker. A domain III region spans residues Ser-157–Leu-205.

This sequence belongs to the RuvA family. In terms of assembly, homotetramer. Forms an RuvA(8)-RuvB(12)-Holliday junction (HJ) complex. HJ DNA is sandwiched between 2 RuvA tetramers; dsDNA enters through RuvA and exits via RuvB. An RuvB hexamer assembles on each DNA strand where it exits the tetramer. Each RuvB hexamer is contacted by two RuvA subunits (via domain III) on 2 adjacent RuvB subunits; this complex drives branch migration. In the full resolvosome a probable DNA-RuvA(4)-RuvB(12)-RuvC(2) complex forms which resolves the HJ.

Its subcellular location is the cytoplasm. Functionally, the RuvA-RuvB-RuvC complex processes Holliday junction (HJ) DNA during genetic recombination and DNA repair, while the RuvA-RuvB complex plays an important role in the rescue of blocked DNA replication forks via replication fork reversal (RFR). RuvA specifically binds to HJ cruciform DNA, conferring on it an open structure. The RuvB hexamer acts as an ATP-dependent pump, pulling dsDNA into and through the RuvAB complex. HJ branch migration allows RuvC to scan DNA until it finds its consensus sequence, where it cleaves and resolves the cruciform DNA. The protein is Holliday junction branch migration complex subunit RuvA of Yersinia enterocolitica serotype O:8 / biotype 1B (strain NCTC 13174 / 8081).